The primary structure comprises 248 residues: tRNA N(3)-methylcytidine methyltransferase trm141 (248 aa).

6 residues coordinate S-adenosyl-L-methionine: tryptophan 23, tyrosine 27, glycine 63, aspartate 86, aspartate 112, and isoleucine 133.

It belongs to the methyltransferase superfamily. METL family.

Its subcellular location is the cytoplasm. The protein localises to the nucleus. The catalysed reaction is cytidine(32) in tRNA(Ser) + S-adenosyl-L-methionine = N(3)-methylcytidine(32) in tRNA(Ser) + S-adenosyl-L-homocysteine + H(+). S-adenosyl-L-methionine-dependent methyltransferase that mediates N(3)-methylcytidine modification of residue 32 of the tRNA anticodon loop of tRNA(Ser). N(3)-methylcytidine methylation by trm141 requires the formation of N(6)-dimethylallyladenosine(37) (i6A37) by tit1 as prerequisite. Does not catalyze N(3)-methylcytidine modification of tRNA(Thr). The polypeptide is tRNA N(3)-methylcytidine methyltransferase trm141 (Schizosaccharomyces pombe (strain 972 / ATCC 24843) (Fission yeast)).